The primary structure comprises 132 residues: Small ribosomal subunit protein uS8 (132 aa).

It belongs to the universal ribosomal protein uS8 family. As to quaternary structure, part of the 30S ribosomal subunit. Contacts proteins S5 and S12.

In terms of biological role, one of the primary rRNA binding proteins, it binds directly to 16S rRNA central domain where it helps coordinate assembly of the platform of the 30S subunit. The chain is Small ribosomal subunit protein uS8 from Micrococcus luteus (strain ATCC 4698 / DSM 20030 / JCM 1464 / CCM 169 / CCUG 5858 / IAM 1056 / NBRC 3333 / NCIMB 9278 / NCTC 2665 / VKM Ac-2230) (Micrococcus lysodeikticus).